A 227-amino-acid polypeptide reads, in one-letter code: Cytochrome c oxidase subunit 2 (227 aa).

Topologically, residues 1–14 (MAYPFQMGLQDATS) are mitochondrial intermembrane. The helical transmembrane segment at 15–45 (PIMEELLHFHDHTLMIVFLISSLVLYIISLM) threads the bilayer. The Mitochondrial matrix portion of the chain corresponds to 46–59 (LTTKLTHTSTMDAQ). A helical membrane pass occupies residues 60–87 (EVETIWTILPAIILILIALPSLRILYMM). The Mitochondrial intermembrane portion of the chain corresponds to 88 to 227 (DEINNPSLTV…HFEKWSASLL (140 aa)). Cu cation-binding residues include His161, Cys196, Glu198, Cys200, His204, and Met207. Position 198 (Glu198) interacts with Mg(2+).

The protein belongs to the cytochrome c oxidase subunit 2 family. In terms of assembly, component of the cytochrome c oxidase (complex IV, CIV), a multisubunit enzyme composed of 14 subunits. The complex is composed of a catalytic core of 3 subunits MT-CO1, MT-CO2 and MT-CO3, encoded in the mitochondrial DNA, and 11 supernumerary subunits COX4I, COX5A, COX5B, COX6A, COX6B, COX6C, COX7A, COX7B, COX7C, COX8 and NDUFA4, which are encoded in the nuclear genome. The complex exists as a monomer or a dimer and forms supercomplexes (SCs) in the inner mitochondrial membrane with NADH-ubiquinone oxidoreductase (complex I, CI) and ubiquinol-cytochrome c oxidoreductase (cytochrome b-c1 complex, complex III, CIII), resulting in different assemblies (supercomplex SCI(1)III(2)IV(1) and megacomplex MCI(2)III(2)IV(2)). Found in a complex with TMEM177, COA6, COX18, COX20, SCO1 and SCO2. Interacts with TMEM177 in a COX20-dependent manner. Interacts with COX20. Interacts with COX16. Requires Cu cation as cofactor.

The protein localises to the mitochondrion inner membrane. The enzyme catalyses 4 Fe(II)-[cytochrome c] + O2 + 8 H(+)(in) = 4 Fe(III)-[cytochrome c] + 2 H2O + 4 H(+)(out). Component of the cytochrome c oxidase, the last enzyme in the mitochondrial electron transport chain which drives oxidative phosphorylation. The respiratory chain contains 3 multisubunit complexes succinate dehydrogenase (complex II, CII), ubiquinol-cytochrome c oxidoreductase (cytochrome b-c1 complex, complex III, CIII) and cytochrome c oxidase (complex IV, CIV), that cooperate to transfer electrons derived from NADH and succinate to molecular oxygen, creating an electrochemical gradient over the inner membrane that drives transmembrane transport and the ATP synthase. Cytochrome c oxidase is the component of the respiratory chain that catalyzes the reduction of oxygen to water. Electrons originating from reduced cytochrome c in the intermembrane space (IMS) are transferred via the dinuclear copper A center (CU(A)) of subunit 2 and heme A of subunit 1 to the active site in subunit 1, a binuclear center (BNC) formed by heme A3 and copper B (CU(B)). The BNC reduces molecular oxygen to 2 water molecules using 4 electrons from cytochrome c in the IMS and 4 protons from the mitochondrial matrix. The protein is Cytochrome c oxidase subunit 2 (MT-CO2) of Ailurus fulgens (Himalayan red panda).